The chain runs to 224 residues: UPF0758 protein Hhal_2301 (224 aa).

The MPN domain occupies 102-224 (TLSSPAQTRT…PVSLAERGVL (123 aa)). Residues His-173, His-175, and Asp-186 each contribute to the Zn(2+) site. A JAMM motif motif is present at residues 173-186 (HNHPSGITEPSAAD).

This sequence belongs to the UPF0758 family.

This chain is UPF0758 protein Hhal_2301, found in Halorhodospira halophila (strain DSM 244 / SL1) (Ectothiorhodospira halophila (strain DSM 244 / SL1)).